The primary structure comprises 372 residues: N-methyl-L-tryptophan oxidase (372 aa).

4–34 (DLIIIGSGSVGAAAGYYATRAGLKVLMTDAH) is a binding site for FAD. Cys307 carries the post-translational modification S-8alpha-FAD cysteine.

This sequence belongs to the MSOX/MTOX family. MTOX subfamily. Monomer. FAD serves as cofactor.

It catalyses the reaction N(alpha)-methyl-L-tryptophan + O2 + H2O = L-tryptophan + formaldehyde + H2O2. Catalyzes the oxidative demethylation of N-methyl-L-tryptophan. The polypeptide is N-methyl-L-tryptophan oxidase (Salmonella arizonae (strain ATCC BAA-731 / CDC346-86 / RSK2980)).